Here is a 397-residue protein sequence, read N- to C-terminus: Acetate kinase (397 aa).

A Mg(2+)-binding site is contributed by asparagine 8. Lysine 15 serves as a coordination point for ATP. Arginine 89 contacts substrate. The active-site Proton donor/acceptor is the aspartate 146. ATP-binding positions include 206 to 210 (HLGNG), 281 to 283 (DLR), and 329 to 333 (GIGEN). Glutamate 382 contributes to the Mg(2+) binding site.

This sequence belongs to the acetokinase family. In terms of assembly, homodimer. The cofactor is Mg(2+). It depends on Mn(2+) as a cofactor.

The protein localises to the cytoplasm. The enzyme catalyses acetate + ATP = acetyl phosphate + ADP. The protein operates within metabolic intermediate biosynthesis; acetyl-CoA biosynthesis; acetyl-CoA from acetate: step 1/2. Catalyzes the formation of acetyl phosphate from acetate and ATP. Can also catalyze the reverse reaction. The polypeptide is Acetate kinase (Geobacillus sp. (strain WCH70)).